A 320-amino-acid chain; its full sequence is 4-hydroxythreonine-4-phosphate dehydrogenase (320 aa).

Substrate is bound at residue Thr132. Residues His161, His205, and His258 each contribute to the a divalent metal cation site. Substrate is bound by residues Lys266, Asn275, and Arg284.

It belongs to the PdxA family. In terms of assembly, homodimer. Requires a divalent metal cation as cofactor.

It is found in the cytoplasm. The enzyme catalyses 4-(phosphooxy)-L-threonine + NAD(+) = 3-amino-2-oxopropyl phosphate + CO2 + NADH. It functions in the pathway cofactor biosynthesis; pyridoxine 5'-phosphate biosynthesis; pyridoxine 5'-phosphate from D-erythrose 4-phosphate: step 4/5. Its function is as follows. Catalyzes the NAD(P)-dependent oxidation of 4-(phosphooxy)-L-threonine (HTP) into 2-amino-3-oxo-4-(phosphooxy)butyric acid which spontaneously decarboxylates to form 3-amino-2-oxopropyl phosphate (AHAP). The polypeptide is 4-hydroxythreonine-4-phosphate dehydrogenase (Aquifex aeolicus (strain VF5)).